Consider the following 179-residue polypeptide: NAD(P)H-quinone oxidoreductase subunit I, chloroplastic (179 aa).

4Fe-4S ferredoxin-type domains follow at residues Gly55–Arg84 and Leu95–Glu124. [4Fe-4S] cluster contacts are provided by Cys64, Cys67, Cys70, Cys74, Cys104, Cys107, Cys110, and Cys114.

Belongs to the complex I 23 kDa subunit family. In terms of assembly, NDH is composed of at least 16 different subunits, 5 of which are encoded in the nucleus. [4Fe-4S] cluster is required as a cofactor.

The protein localises to the plastid. The protein resides in the chloroplast thylakoid membrane. It carries out the reaction a plastoquinone + NADH + (n+1) H(+)(in) = a plastoquinol + NAD(+) + n H(+)(out). The enzyme catalyses a plastoquinone + NADPH + (n+1) H(+)(in) = a plastoquinol + NADP(+) + n H(+)(out). NDH shuttles electrons from NAD(P)H:plastoquinone, via FMN and iron-sulfur (Fe-S) centers, to quinones in the photosynthetic chain and possibly in a chloroplast respiratory chain. The immediate electron acceptor for the enzyme in this species is believed to be plastoquinone. Couples the redox reaction to proton translocation, and thus conserves the redox energy in a proton gradient. In Nuphar advena (Common spatterdock), this protein is NAD(P)H-quinone oxidoreductase subunit I, chloroplastic.